The following is a 377-amino-acid chain: F-box protein At2g05970 (377 aa).

Positions 8–55 constitute an F-box domain; the sequence is ASWSELCPDVLRCVFELLSFSDLNRTRSVCSSWHSASRHCVPTQNQIP.

The chain is F-box protein At2g05970 from Arabidopsis thaliana (Mouse-ear cress).